Here is a 524-residue protein sequence, read N- to C-terminus: Leucine-rich repeat-containing protein 1 (524 aa).

LRR repeat units follow at residues 11-34 (NRHV…IYRY), 35-58 (ARSL…FFQL), 60-81 (KLRK…IANF), 83-105 (QLVE…AFCK), 107-126 (LQVA…SFPE), 127-149 (LQNL…NIGN), 150-172 (LYNL…SLTQ), 173-196 (LRRL…IGAL), 198-218 (HLKD…EIGN), 219-242 (LKNL…ISGL), 244-264 (SLTY…GIGK), 265-288 (LKKL…IGDC), 290-310 (NLTE…SIGK), 311-334 (LKKL…IGGC), 336-356 (SLTM…EVSQ), 357-380 (AVEL…LTTL), and 382-405 (LKAL…IDRA). The stretch at 456-512 (SAIRFLEDEKDEDENETRTLQRRATPHPGELKNMKKTVENLRNDMNAAKGLDSNKNE) forms a coiled coil. The disordered stretch occupies residues 464–485 (EKDEDENETRTLQRRATPHPGE). Thr-480 is subject to Phosphothreonine.

As to quaternary structure, interacts with DLG1. May form a complex with DLG1 and ERBIN, where interaction between LRRC1 and ERBIN is indirect.

It is found in the cytoplasm. The protein resides in the membrane. This is Leucine-rich repeat-containing protein 1 (Lrrc1) from Mus musculus (Mouse).